A 154-amino-acid chain; its full sequence is S-protein homolog 12 (154 aa).

Positions 1-30 are cleaved as a signal peptide; sequence MGTNKIPKTLNGNLVLILIITIMMVTHSHG.

It belongs to the plant self-incompatibility (S1) protein family.

It is found in the secreted. In Arabidopsis thaliana (Mouse-ear cress), this protein is S-protein homolog 12.